The following is a 160-amino-acid chain: V-type proton ATPase subunit c (160 aa).

The Lumenal portion of the chain corresponds to 1–6 (MSDLCP). A helical transmembrane segment spans residues 7 to 27 (VYAPFFGSIGCAAAIVFTCFG). Topologically, residues 28-53 (ASYGTAKSGVGICATSVTRPDLLVKN) are cytoplasmic. A helical membrane pass occupies residues 54-74 (VVPVVMAGIIAIYGLVVSVLV). Residues 75–90 (SDSLSQKQALYTGFIQ) are Lumenal-facing. The chain crosses the membrane as a helical span at residues 91–111 (LGAGLSVGLSGLAAGFAIGIV). Over 112–129 (GDAGVRGTAQQPRLFVGM) the chain is Cytoplasmic. A helical membrane pass occupies residues 130–150 (ILILIFAEVLGLYGLIVALLL). Over 151-160 (NSRASQDVTC) the chain is Lumenal.

The protein belongs to the V-ATPase proteolipid subunit family. In terms of assembly, V-ATPase is a heteromultimeric enzyme composed of a peripheral catalytic V1 complex (components A to H) attached to an integral membrane V0 proton pore complex (components: a, c, c', c'', d, e, f and VOA1). The decameric c-ring forms the proton-conducting pore, and is composed of eight proteolipid subunits c, one subunit c' and one subunit c''.

The protein resides in the vacuole membrane. Its function is as follows. Proton-conducting pore forming subunit of the V0 complex of vacuolar(H+)-ATPase (V-ATPase), a multisubunit enzyme composed of a peripheral complex (V1) that hydrolyzes ATP and a membrane integral complex (V0) that translocates protons. V-ATPase is responsible for acidifying and maintaining the pH of intracellular compartments. This chain is V-type proton ATPase subunit c (VMA3), found in Candida tropicalis (Yeast).